The following is a 308-amino-acid chain: Uridylate cyclase (308 aa).

D62 and D106 together coordinate Mn(2+).

Belongs to the adenylyl cyclase class-4/guanylyl cyclase family. Pyrimidine cyclase subfamily. As to quaternary structure, homodimer. Mn(2+) serves as cofactor.

The protein localises to the cytoplasm. It carries out the reaction GTP = 3',5'-cyclic GMP + diphosphate. The enzyme catalyses UTP = 3',5'-cyclic UMP + diphosphate. Functionally, pycsar (pyrimidine cyclase system for antiphage resistance) provides immunity against bacteriophage. The pyrimidine cyclase (PycC) synthesizes cyclic nucleotides in response to infection; these serve as specific second messenger signals. The signals activate the adjacent effector, leading to bacterial cell death and abortive phage infection. A clade D Pycsar system. The pyrimidine cyclase gene of a two-gene Pycsar system, generates cyclic UMP (cUMP) from UTP as well as cGMP from GTP to a lesser extent, has little to no activity on ATP or CTP. Expression of this and adjacent effector PtPycTM (AC A0A4Q9KQH5) probably confers resistance to bacteriophage. The genes are probably only expressed in response to bacteriophage infection. This is Uridylate cyclase from Propioniciclava tarda.